The primary structure comprises 277 residues: UPF0276 protein PP_2398 (277 aa).

Belongs to the UPF0276 family.

The protein is UPF0276 protein PP_2398 of Pseudomonas putida (strain ATCC 47054 / DSM 6125 / CFBP 8728 / NCIMB 11950 / KT2440).